The chain runs to 347 residues: Ornithine transcarbamylase, mitochondrial (347 aa).

Residues 1–25 (MINSISNTVLLKSVVSKRFFSSSAK) constitute a mitochondrion transit peptide. Residues 84-87 (STRT), R135, H162, and Q165 contribute to the carbamoyl phosphate site. N194, D258, S262, and M263 together coordinate L-ornithine. The active-site Proton acceptor is the C300. Residues 300–301 (CL) and R328 each bind carbamoyl phosphate.

The protein belongs to the aspartate/ornithine carbamoyltransferase superfamily. OTCase family.

It is found in the mitochondrion matrix. The enzyme catalyses carbamoyl phosphate + L-ornithine = L-citrulline + phosphate + H(+). It participates in amino-acid biosynthesis; L-arginine biosynthesis; L-arginine from L-ornithine and carbamoyl phosphate: step 1/3. The protein is Ornithine transcarbamylase, mitochondrial (OTC) of Pachysolen tannophilus (Yeast).